The following is a 201-amino-acid chain: Ribosomal RNA large subunit methyltransferase E (201 aa).

Positions 40, 42, 62, 78, and 101 each coordinate S-adenosyl-L-methionine. Lys141 acts as the Proton acceptor in catalysis.

Belongs to the class I-like SAM-binding methyltransferase superfamily. RNA methyltransferase RlmE family.

It localises to the cytoplasm. It carries out the reaction uridine(2552) in 23S rRNA + S-adenosyl-L-methionine = 2'-O-methyluridine(2552) in 23S rRNA + S-adenosyl-L-homocysteine + H(+). Specifically methylates the uridine in position 2552 of 23S rRNA at the 2'-O position of the ribose in the fully assembled 50S ribosomal subunit. This chain is Ribosomal RNA large subunit methyltransferase E, found in Anaplasma marginale (strain Florida).